Consider the following 108-residue polypeptide: Large ribosomal subunit protein uL24 (108 aa).

The protein belongs to the universal ribosomal protein uL24 family. Part of the 50S ribosomal subunit.

In terms of biological role, one of two assembly initiator proteins, it binds directly to the 5'-end of the 23S rRNA, where it nucleates assembly of the 50S subunit. Functionally, one of the proteins that surrounds the polypeptide exit tunnel on the outside of the subunit. This is Large ribosomal subunit protein uL24 from Mycoplasma mycoides subsp. mycoides SC (strain CCUG 32753 / NCTC 10114 / PG1).